Consider the following 333-residue polypeptide: Phosphate acetyltransferase (333 aa).

It belongs to the phosphate acetyltransferase and butyryltransferase family.

Its subcellular location is the cytoplasm. It catalyses the reaction acetyl-CoA + phosphate = acetyl phosphate + CoA. The protein operates within metabolic intermediate biosynthesis; acetyl-CoA biosynthesis; acetyl-CoA from acetate: step 2/2. The protein is Phosphate acetyltransferase (pta) of Clostridium acetobutylicum (strain ATCC 824 / DSM 792 / JCM 1419 / IAM 19013 / LMG 5710 / NBRC 13948 / NRRL B-527 / VKM B-1787 / 2291 / W).